We begin with the raw amino-acid sequence, 409 residues long: Patellin-6 (409 aa).

Residues 116 to 294 enclose the CRAL-TRIO domain; that stretch reads EKLTEEDLGF…QYGGLSRPTD (179 aa). The region spanning 270 to 404 is the GOLD domain; that stretch reads AETLYKFIRP…VAAYRYTVRK (135 aa).

The protein belongs to the patellin family.

It localises to the membrane. It is found in the cytoplasm. In terms of biological role, carrier protein that may be involved in membrane-trafficking events associated with cell-plate formation during cytokinesis. Binds to some hydrophobic molecules such as phosphoinositides and promotes their transfer between the different cellular sites. The protein is Patellin-6 (PATL6) of Arabidopsis thaliana (Mouse-ear cress).